The primary structure comprises 2216 residues: Protein Ycf2 (2216 aa).

1567–1574 (GSIGTGRS) contacts ATP.

It belongs to the Ycf2 family.

Its subcellular location is the plastid stroma. Probable ATPase of unknown function. Its presence in a non-photosynthetic plant (Epifagus virginiana) and experiments in tobacco indicate that it has an essential function which is probably not related to photosynthesis. The sequence is that of Protein Ycf2 from Epifagus virginiana (Beechdrops).